Here is a 1138-residue protein sequence, read N- to C-terminus: uncharacterized protein (1138 aa).

Positions 1–28 (MKLFPRSILIILVLSFALNLGLVTKTHA) are cleaved as a signal peptide. The next 7 helical transmembrane spans lie at 331-351 (IVTA…LLAG), 359-379 (YINF…INIT), 392-412 (MIQW…SWVM), 494-514 (MLVS…AFMV), 520-540 (CMIS…MFLF), 554-574 (MISF…MFSV), and 699-719 (IKNI…MYNF). Over residues 775–784 (DLKAGQGGGV) the composition is skewed to gly residues. Disordered regions lie at residues 775 to 914 (DLKA…KGTG), 958 to 977 (GGGR…RTNA), and 995 to 1071 (ERDN…KQIR). Positions 801–830 (AASGGTSAPTVTTPTASSSVATSSPKTVSS) are enriched in low complexity. Residues 838 to 852 (TPPPAPSEAVSPPPA) show a composition bias toward pro residues. Residues 854-869 (IRTSISTPAPQSNIET) are compositionally biased toward polar residues. Composition is skewed to basic and acidic residues over residues 875-888 (IIRD…KEID), 961-977 (RIRD…RTNA), 995-1032 (ERDN…RKEN), and 1058-1071 (LKEH…KQIR).

Belongs to the TrbL/VirB6 family.

The protein localises to the cell membrane. This is an uncharacterized protein from Rickettsia felis (strain ATCC VR-1525 / URRWXCal2) (Rickettsia azadi).